Consider the following 125-residue polypeptide: Allatostatin (125 aa).

The first 26 residues, 1 to 26, serve as a signal peptide directing secretion; sequence MKTSAYNVYLGVVAAMLALLFVTINA. A propeptide spanning residues 27–106 is cleaved from the precursor; it reads APMEADDETA…SRLARQWRAD (80 aa). Position 109 is a pyrrolidone carboxylic acid (glutamine 109).

Belongs to the allatostatin family.

It localises to the secreted. In terms of biological role, strongly inhibits juvenile hormone biosynthesis in vitro by the corpora allata from fifth-stadium larvae and adult females. This is Allatostatin from Spodoptera frugiperda (Fall armyworm).